The chain runs to 420 residues: ATP phosphoribosyltransferase regulatory subunit (420 aa).

It belongs to the class-II aminoacyl-tRNA synthetase family. HisZ subfamily. In terms of assembly, heteromultimer composed of HisG and HisZ subunits.

The protein localises to the cytoplasm. The protein operates within amino-acid biosynthesis; L-histidine biosynthesis; L-histidine from 5-phospho-alpha-D-ribose 1-diphosphate: step 1/9. Required for the first step of histidine biosynthesis. May allow the feedback regulation of ATP phosphoribosyltransferase activity by histidine. This is ATP phosphoribosyltransferase regulatory subunit from Bacillus cereus (strain G9842).